The chain runs to 403 residues: Ribosomal RNA large subunit methyltransferase I (403 aa).

The PUA domain occupies 9-88; it reads YPRLVLSKGR…ESIDIAFFTR (80 aa).

This sequence belongs to the methyltransferase superfamily. RlmI family.

It localises to the cytoplasm. It carries out the reaction cytidine(1962) in 23S rRNA + S-adenosyl-L-methionine = 5-methylcytidine(1962) in 23S rRNA + S-adenosyl-L-homocysteine + H(+). Its function is as follows. Specifically methylates the cytosine at position 1962 (m5C1962) of 23S rRNA. This chain is Ribosomal RNA large subunit methyltransferase I, found in Salmonella newport (strain SL254).